Consider the following 539-residue polypeptide: Phosphoenolpyruvate carboxykinase (ATP) (539 aa).

Residues Arg-64, Tyr-206, and Lys-212 each coordinate substrate. ATP contacts are provided by residues Lys-212, His-231, and 247–255; that span reads GLSGTGKTT. Mn(2+) contacts are provided by Lys-212 and His-231. Residue Asp-268 participates in Mn(2+) binding. Residues Glu-296, Arg-332, 448–449, and Thr-454 contribute to the ATP site; that span reads RI. Residue Arg-332 coordinates substrate.

This sequence belongs to the phosphoenolpyruvate carboxykinase (ATP) family. Monomer. The cofactor is Mn(2+).

Its subcellular location is the cytoplasm. It catalyses the reaction oxaloacetate + ATP = phosphoenolpyruvate + ADP + CO2. Its pathway is carbohydrate biosynthesis; gluconeogenesis. Involved in the gluconeogenesis. Catalyzes the conversion of oxaloacetate (OAA) to phosphoenolpyruvate (PEP) through direct phosphoryl transfer between the nucleoside triphosphate and OAA. This chain is Phosphoenolpyruvate carboxykinase (ATP), found in Pectobacterium carotovorum subsp. carotovorum (strain PC1).